Consider the following 612-residue polypeptide: MDANVQIRPARNNPSQGNQGRNNNNKRRRRRRGLKLPPVVAPITSPGQMAEPANHANTRVNRGRTRVRGLRQAMMESPMAATSEAWIHDYLDPDGEYKTSLDDGKIPDGAIPQSTCGQFRGTVGARYPGLNSTTLPLDGGTWPLLVMHLPFFRHPLLFITTTSNTEVEVTNADLDAFANDWNNRTDWTEATYPSWAQVGNVFYMVVPTEALTDVPPPTQLGVSGLLESYRLTSSGVTAYFNAPTLVNQGVAVIAQFQPDKEHQKENPDIVAGTTQTGGTLQLGGSGPNYTLTMTIGDQVEFGGAAIPLPTVSMGPMPESGQLVFQTANLTFDVGNTITITTTLPPGSVTGMWQFTASNGTDTVTVDAGARLYAFGANLDASELNLQDINSIKIPPTNMNQMMQATPKTIQFQLNETKGFYMPLRAFQPVFEMTMATSYGPVRWKTPRTTVVDYHRAIGGLQDTIDSNFAIGVAAMTGMSTSTVPYFKVFRRFEAIPAEGSPWGPFASATPPKDDVALTVARTWTDLHPFAYPERYNGFGALFAMVAKTIAQIPRYVRSAAGVANAVTDCIESATESVASNSTSERRQRRARRVGGIARGARNLVGRIGNLSL.

Residues Met1–Ala53 form a disordered region. The segment covering Arg11–Asn23 has biased composition (low complexity). Over residues Asn24–Leu34 the composition is skewed to basic residues.

The protein belongs to the tetravirus capsid protein family.

The protein resides in the virion. Functionally, self-assembles to form an icosahedral capsid with a T=4 symmetry, about 35 nm in diameter, and consisting of 240 copies of the two structural proteins. The sequence is that of Capsid protein from Nudaurelia capensis beta virus (isolate Pine emperor moth/South Africa) (NbetaV).